The sequence spans 562 residues: Oxygen-dependent choline dehydrogenase (562 aa).

FAD is bound at residue aspartate 4–glutamate 33. The active-site Proton acceptor is the histidine 473.

Belongs to the GMC oxidoreductase family. The cofactor is FAD.

It is found in the cell membrane. It catalyses the reaction choline + A = betaine aldehyde + AH2. It carries out the reaction betaine aldehyde + NAD(+) + H2O = glycine betaine + NADH + 2 H(+). The protein operates within amine and polyamine biosynthesis; betaine biosynthesis via choline pathway; betaine aldehyde from choline (cytochrome c reductase route): step 1/1. Its function is as follows. Involved in the biosynthesis of the osmoprotectant glycine betaine. Catalyzes the oxidation of choline to betaine aldehyde and betaine aldehyde to glycine betaine at the same rate. The chain is Oxygen-dependent choline dehydrogenase from Escherichia coli O157:H7.